A 558-amino-acid polypeptide reads, in one-letter code: Alkaline/neutral invertase CINV2 (558 aa).

3 positions are modified to phosphoserine: S16, S19, and S50. At T79 the chain carries Phosphothreonine. Position 555 is a phosphoserine (S555).

Belongs to the glycosyl hydrolase 100 family.

The protein localises to the cytoplasm. It localises to the cytosol. It catalyses the reaction Hydrolysis of terminal non-reducing beta-D-fructofuranoside residues in beta-D-fructofuranosides.. Functionally, cytosolic invertase that may cleave sucrose into glucose and fructose, and that is involved in the regulation of root growth. May regulate sugar-mediated root development by controlling sucrose catabolism in root cells. This chain is Alkaline/neutral invertase CINV2, found in Arabidopsis thaliana (Mouse-ear cress).